Reading from the N-terminus, the 1333-residue chain is MAAAWQGWLLWALLLNSAQGELYTPTHKAGFCTFYEECGKNPELSGGLTSLSNISCLSNTPARHVTGDHLALLQRVCPRLYNGPNDTYACCSTKQLVSLDSSLSITKALLTRCPACSENFVSIHCHNTCSPDQSLFINVTRVVQRDPGQLPAVVAYEAFYQRSFAEKAYESCSRVRIPAAASLAVGSMCGVYGSALCNAQRWLNFQGDTGNGLAPLDITFHLLEPGQALADGMKPLDGKITPCNESQGEDSAACSCQDCAASCPVIPPPPALRPSFYMGRMPGWLALIIIFTAVFVLLSVVLVYLRVASNRNKNKTAGSQEAPNLPRKRRFSPHTVLGRFFESWGTRVASWPLTVLALSFIVVIALSVGLTFIELTTDPVELWSAPKSQARKEKAFHDEHFGPFFRTNQIFVTAKNRSSYKYDSLLLGPKNFSGILSLDLLQELLELQERLRHLQVWSHEAQRNISLQDICYAPLNPHNTSLTDCCVNSLLQYFQNNHTLLLLTANQTLNGQTSLVDWKDHFLYCANAPLTYKDGTALALSCIADYGAPVFPFLAVGGYQGTDYSEAEALIITFSINNYPADDPRMAHAKLWEEAFLKEMQSFQRSTADKFQIAFSAERSLEDEINRTTIQDLPVFAISYLIVFLYISLALGSYSRWSRVAVDSKATLGLGGVAVVLGAVVAAMGFYSYLGVPSSLVIIQVVPFLVLAVGADNIFIFVLEYQRLPRMPGEQREAHIGRTLGSVAPSMLLCSLSEAICFFLGALTSMPAVRTFALTSGLAIIFDFLLQMTAFVALLSLDSKRQEASRPDVVCCFSSRNLPPPKQKEGLLLCFFRKIYTPFLLHRFIRPVVLLLFLVLFGANLYLMCNISVGLDQDLALPKDSYLIDYFLFLNRYLEVGPPVYFDTTSGYNFSTEAGMNAICSSAGCESFSLTQKIQYASEFPNQSYVAIAASSWVDDFIDWLTPSSSCCRIYTRGPHKDEFCPSTDTSFNCLKNCMNRTLGPVRPTTEQFHKYLPWFLNDTPNIRCPKGGLAAYRTSVNLSSDGQIIASQFMAYHKPLRNSQDFTEALRASRLLAANITAELRKVPGTDPNFEVFPYTISNVFYQQYLTVLPEGIFTLALCFVPTFVVCYLLLGLDIRSGILNLLSIIMILVDTIGLMAVWGISYNAVSLINLVTAVGMSVEFVSHITRSFAVSTKPTRLERAKDATIFMGSAVFAGVAMTNFPGILILGFAQAQLIQIFFFRLNLLITLLGLLHGLVFLPVVLSYLGPDVNQALVLEEKLATEAAMVSEPSCPQYPFPADANTSDYVNYGFNPEFIPEINAASSSLPKSDQKF.

Residues 1-20 form the signal peptide; the sequence is MAAAWQGWLLWALLLNSAQG. Residues 21–284 lie on the Extracellular side of the membrane; sequence ELYTPTHKAG…SFYMGRMPGW (264 aa). Intrachain disulfides connect C32–C90, C38–C56, C77–C125, C91–C129, C113–C254, C116–C172, C189–C197, C243–C259, and C256–C263. The chain crosses the membrane as a helical span at residues 285–305; sequence LALIIIFTAVFVLLSVVLVYL. The Cytoplasmic segment spans residues 306-352; that stretch reads RVASNRNKNKTAGSQEAPNLPRKRRFSPHTVLGRFFESWGTRVASWP. Residues 353–373 form a helical membrane-spanning segment; it reads LTVLALSFIVVIALSVGLTFI. The Extracellular segment spans residues 374-632; that stretch reads ELTTDPVELW…DEINRTTIQD (259 aa). 2 disulfides stabilise this stretch: C471–C485 and C525–C542. Positions 632-797 constitute an SSD domain; sequence DLPVFAISYL…MTAFVALLSL (166 aa). The helical transmembrane segment at 633–653 threads the bilayer; it reads LPVFAISYLIVFLYISLALGS. At 654–665 the chain is on the cytoplasmic side; that stretch reads YSRWSRVAVDSK. A helical transmembrane segment spans residues 666-686; that stretch reads ATLGLGGVAVVLGAVVAAMGF. Residues 687-696 are Extracellular-facing; the sequence is YSYLGVPSSL. The helical transmembrane segment at 697–717 threads the bilayer; it reads VIIQVVPFLVLAVGADNIFIF. Residues 718–742 are Cytoplasmic-facing; the sequence is VLEYQRLPRMPGEQREAHIGRTLGS. A helical transmembrane segment spans residues 743–763; sequence VAPSMLLCSLSEAICFFLGAL. Residues 764 to 776 are Extracellular-facing; the sequence is TSMPAVRTFALTS. Residues 777–797 form a helical membrane-spanning segment; that stretch reads GLAIIFDFLLQMTAFVALLSL. The Cytoplasmic segment spans residues 798-846; the sequence is DSKRQEASRPDVVCCFSSRNLPPPKQKEGLLLCFFRKIYTPFLLHRFIR. Residues 847–867 form a helical membrane-spanning segment; it reads PVVLLLFLVLFGANLYLMCNI. At 868–1113 the chain is on the extracellular side; the sequence is SVGLDQDLAL…QQYLTVLPEG (246 aa). 3 disulfide bridges follow: C920/C925, C967/C1025, and C981/C990. A helical membrane pass occupies residues 1114–1134; it reads IFTLALCFVPTFVVCYLLLGL. Topologically, residues 1135-1142 are cytoplasmic; it reads DIRSGILN. The chain crosses the membrane as a helical span at residues 1143–1163; that stretch reads LLSIIMILVDTIGLMAVWGIS. At 1164 to 1165 the chain is on the extracellular side; that stretch reads YN. Residues 1166–1186 form a helical membrane-spanning segment; that stretch reads AVSLINLVTAVGMSVEFVSHI. The Cytoplasmic portion of the chain corresponds to 1187 to 1206; sequence TRSFAVSTKPTRLERAKDAT. Residues 1207-1227 form a helical membrane-spanning segment; the sequence is IFMGSAVFAGVAMTNFPGILI. Residues 1228–1242 lie on the Extracellular side of the membrane; it reads LGFAQAQLIQIFFFR. The chain crosses the membrane as a helical span at residues 1243–1263; the sequence is LNLLITLLGLLHGLVFLPVVL. At 1264-1333 the chain is on the cytoplasmic side; sequence SYLGPDVNQA…SSLPKSDQKF (70 aa).

The protein belongs to the patched family. Interacts with RAB11A, MYO5B and RAB11FIP2. Interaction with RAB11A, MYO5B and RAB11FIP2 is required for proper transport to the plasma membrane upon cholesterol depletion. Interacts with NPC2. Interacts with LIMA1. Highly glycosylated. In terms of tissue distribution, expressed in small intestine, stomach and muscle, along with detectable expression in lung, heart, gall bladder, brain, testis, skin and liver. Expression in liver is extremely low.

The protein resides in the apical cell membrane. It is found in the cell membrane. It carries out the reaction cholesterol(in) = cholesterol(out). The catalysed reaction is sitosterol(out) = sitosterol(in). Plays a major role in cholesterol homeostasis. Critical for the uptake of cholesterol across the plasma membrane of the intestinal enterocyte. Involved in plant sterol absorption, it transports sitosterol, although at lower rates than cholesterol. May have a function in the transport of multiple lipids and their homeostasis, thereby influencing lipid metabolism regulation. May be involved in caveolin trafficking from the plasma membrane. Acts as a negative regulator of NPC2 and down-regulates its expression and secretion by inhibiting its maturation and accelerating its degradation. The sequence is that of NPC1-like intracellular cholesterol transporter 1 from Mus musculus (Mouse).